We begin with the raw amino-acid sequence, 359 residues long: Peptide chain release factor 1 (359 aa).

Residue Gln235 is modified to N5-methylglutamine. Positions 283–309 (QKAESERSQARRSQVGSGDRSERIRTY) are disordered.

This sequence belongs to the prokaryotic/mitochondrial release factor family. Methylated by PrmC. Methylation increases the termination efficiency of RF1.

The protein resides in the cytoplasm. Functionally, peptide chain release factor 1 directs the termination of translation in response to the peptide chain termination codons UAG and UAA. This chain is Peptide chain release factor 1, found in Brucella suis (strain ATCC 23445 / NCTC 10510).